A 230-amino-acid polypeptide reads, in one-letter code: Ribosomal RNA large subunit methyltransferase E (230 aa).

Positions 82, 84, 100, 116, and 140 each coordinate S-adenosyl-L-methionine. K180 acts as the Proton acceptor in catalysis.

It belongs to the class I-like SAM-binding methyltransferase superfamily. RNA methyltransferase RlmE family.

Its subcellular location is the cytoplasm. The enzyme catalyses uridine(2552) in 23S rRNA + S-adenosyl-L-methionine = 2'-O-methyluridine(2552) in 23S rRNA + S-adenosyl-L-homocysteine + H(+). Functionally, specifically methylates the uridine in position 2552 of 23S rRNA at the 2'-O position of the ribose in the fully assembled 50S ribosomal subunit. The polypeptide is Ribosomal RNA large subunit methyltransferase E (Granulibacter bethesdensis (strain ATCC BAA-1260 / CGDNIH1)).